The sequence spans 116 residues: Large ribosomal subunit protein uL18 (116 aa).

Belongs to the universal ribosomal protein uL18 family. As to quaternary structure, part of the 50S ribosomal subunit; part of the 5S rRNA/L5/L18/L25 subcomplex. Contacts the 5S and 23S rRNAs.

This is one of the proteins that bind and probably mediate the attachment of the 5S RNA into the large ribosomal subunit, where it forms part of the central protuberance. The chain is Large ribosomal subunit protein uL18 from Pseudoalteromonas translucida (strain TAC 125).